The primary structure comprises 245 residues: tRNA pseudouridine synthase A 1 (245 aa).

Aspartate 53 (nucleophile) is an active-site residue. Tyrosine 111 provides a ligand contact to substrate.

The protein belongs to the tRNA pseudouridine synthase TruA family. In terms of assembly, homodimer.

It catalyses the reaction uridine(38/39/40) in tRNA = pseudouridine(38/39/40) in tRNA. Its function is as follows. Formation of pseudouridine at positions 38, 39 and 40 in the anticodon stem and loop of transfer RNAs. This is tRNA pseudouridine synthase A 1 from Clostridium tetani (strain Massachusetts / E88).